Consider the following 318-residue polypeptide: Malate dehydrogenase (318 aa).

NAD(+)-binding positions include 10–15 (GGGQIG) and Asp-34. Positions 83 and 89 each coordinate substrate. NAD(+)-binding positions include Asn-96 and 119–121 (ISN). Residues Asn-121 and Arg-152 each contribute to the substrate site. Catalysis depends on His-176, which acts as the Proton acceptor.

It belongs to the LDH/MDH superfamily. MDH type 3 family.

It catalyses the reaction (S)-malate + NAD(+) = oxaloacetate + NADH + H(+). Catalyzes the reversible oxidation of malate to oxaloacetate. This chain is Malate dehydrogenase, found in Geotalea uraniireducens (strain Rf4) (Geobacter uraniireducens).